The chain runs to 268 residues: Hydroxyethylthiazole kinase (268 aa).

Position 45 (Met45) interacts with substrate. Arg121 and Thr167 together coordinate ATP. Position 194 (Gly194) interacts with substrate.

It belongs to the Thz kinase family. The cofactor is Mg(2+).

The enzyme catalyses 5-(2-hydroxyethyl)-4-methylthiazole + ATP = 4-methyl-5-(2-phosphooxyethyl)-thiazole + ADP + H(+). Its pathway is cofactor biosynthesis; thiamine diphosphate biosynthesis; 4-methyl-5-(2-phosphoethyl)-thiazole from 5-(2-hydroxyethyl)-4-methylthiazole: step 1/1. Its function is as follows. Catalyzes the phosphorylation of the hydroxyl group of 4-methyl-5-beta-hydroxyethylthiazole (THZ). The sequence is that of Hydroxyethylthiazole kinase from Bacillus cereus (strain ATCC 10987 / NRS 248).